The following is a 607-amino-acid chain: Elongation factor 4 (607 aa).

The 183-residue stretch at 11–193 folds into the tr-type G domain; it reads SKIRNFSIIA…QIVEKVPAPA (183 aa). GTP is bound by residues 23–28 and 140–143; these read DHGKST and NKID.

The protein belongs to the TRAFAC class translation factor GTPase superfamily. Classic translation factor GTPase family. LepA subfamily.

It is found in the cell membrane. The enzyme catalyses GTP + H2O = GDP + phosphate + H(+). In terms of biological role, required for accurate and efficient protein synthesis under certain stress conditions. May act as a fidelity factor of the translation reaction, by catalyzing a one-codon backward translocation of tRNAs on improperly translocated ribosomes. Back-translocation proceeds from a post-translocation (POST) complex to a pre-translocation (PRE) complex, thus giving elongation factor G a second chance to translocate the tRNAs correctly. Binds to ribosomes in a GTP-dependent manner. This Bacillus cereus (strain ATCC 14579 / DSM 31 / CCUG 7414 / JCM 2152 / NBRC 15305 / NCIMB 9373 / NCTC 2599 / NRRL B-3711) protein is Elongation factor 4.